The chain runs to 48 residues: uncharacterized protein (48 aa).

A helical membrane pass occupies residues 25–47 (TFASIGVTVGVQIVILLIWGLSW).

It is found in the membrane. This is an uncharacterized protein from Archaeoglobus fulgidus (strain ATCC 49558 / DSM 4304 / JCM 9628 / NBRC 100126 / VC-16).